The primary structure comprises 241 residues: Platelet-derived growth factor subunit B (241 aa).

The signal sequence occupies residues 1–20 (MNRCWALFLSLCCYLRLVSA). Positions 21–81 (EGDPIPEELY…ELESLARGRR (61 aa)) are cleaved as a propeptide — removed in mature form. The N-linked (GlcNAc...) asparagine glycan is linked to Asn-63. 3 cysteine pairs are disulfide-bonded: Cys-97–Cys-141, Cys-130–Cys-178, and Cys-134–Cys-180. Residues 191–241 (RSPGGSQEQRAKTPQTRVTIRTVRVRRPPKGKHRKFKHTHDKTALKETLGA) constitute a propeptide, removed in mature form. The segment covering 216-230 (RRPPKGKHRKFKHTH) has biased composition (basic residues). The disordered stretch occupies residues 216 to 241 (RRPPKGKHRKFKHTHDKTALKETLGA).

Belongs to the PDGF/VEGF growth factor family. As to quaternary structure, antiparallel homodimer; disulfide-linked. Antiparallel heterodimer with PDGFA; disulfide-linked. The PDGFB homodimer interacts with PDGFRA and PDGFRB homodimers, and with heterodimers formed by PDGFRA and PDGFRB. The heterodimer composed of PDGFA and PDGFB interacts with PDGFRB homodimers, and with heterodimers formed by PDGFRA and PDGFRB. Interacts with XLKD1. Interacts with LRP1. Interacts with SORL1 (via the N-terminal ectodomain). Interacts with CD82; this interaction inhibits PDGFB-mediated signaling pathway. In terms of tissue distribution, expressed at high levels in the heart, brain (sustantia nigra), placenta and fetal kidney. Expressed at moderate levels in the brain (hippocampus), skeletal muscle, kidney and lung.

Its subcellular location is the secreted. Its function is as follows. Growth factor that plays an essential role in the regulation of embryonic development, cell proliferation, cell migration, survival and chemotaxis. Potent mitogen for cells of mesenchymal origin. Required for normal proliferation and recruitment of pericytes and vascular smooth muscle cells in the central nervous system, skin, lung, heart and placenta. Required for normal blood vessel development, and for normal development of kidney glomeruli. Plays an important role in wound healing. Signaling is modulated by the formation of heterodimers with PDGFA. The sequence is that of Platelet-derived growth factor subunit B (PDGFB) from Homo sapiens (Human).